Here is a 163-residue protein sequence, read N- to C-terminus: Nucleotide-binding protein EAT1b_2037 (163 aa).

The protein belongs to the YajQ family.

Functionally, nucleotide-binding protein. The protein is Nucleotide-binding protein EAT1b_2037 of Exiguobacterium sp. (strain ATCC BAA-1283 / AT1b).